A 475-amino-acid chain; its full sequence is Equilibrative nucleoside transporter 3 (475 aa).

The Cytoplasmic segment spans residues 1–51 (MAFASEDIAYHSSNAVYRVPSNRHEADQEALLGKPLDYPAPGLQRPEDRFN). Residue S21 is modified to Phosphoserine. A Dileucine internalization motif motif is present at residues 31 to 32 (LL). Residues 52-72 (GAYIIFFCLGIGGLLPWNFFV) form a helical membrane-spanning segment. At 73–105 (TAKEYWAFKLRNCSSPASGKDPEDADILNYFES) the chain is on the extracellular side. N84 carries an N-linked (GlcNAc...) asparagine glycan. Residues 106-126 (YLAVASTVPSLLFLVANFLLV) traverse the membrane as a helical segment. Topologically, residues 127–132 (NRIRVH) are cytoplasmic. Residues 133–153 (VRVLASLSVSLAIFVVMAVLV) traverse the membrane as a helical segment. At 154–162 (RVDTSSWTR) the chain is on the extracellular side. The helical transmembrane segment at 163-183 (GFFSIAMACMAIISSSSTIFN) threads the bilayer. Residues 184 to 199 (SSVYGLTGSFPMRNAQ) are Cytoplasmic-facing. Residues 200–220 (ALISGGAMGGTVSAVASLVDL) traverse the membrane as a helical segment. Residues 221 to 230 (AASSDVRDSA) are Extracellular-facing. The helical transmembrane segment at 231 to 251 (LAFFLTAAVFLGLCVGLYLLL) threads the bilayer. Over 252-305 (PQLEYARYYMRPVVPIHVFSSEDSPPRDAPSTSSVAPASRAVHTPPLGPILKKT) the chain is Cytoplasmic. The segment at 272 to 291 (SEDSPPRDAPSTSSVAPASR) is disordered. Residues 306–326 (AGLGFCAVFLYFITALIFPAI) traverse the membrane as a helical segment. Over 327–340 (STNIQPMHKGTGSP) the chain is Extracellular. The chain crosses the membrane as a helical span at residues 341 to 361 (WTSKFYVPLTVFLLFNFADLC). The Cytoplasmic portion of the chain corresponds to 362–377 (GRQVTAWIQVPGPRSK). Residues 378–398 (LLPILAVSRVCLVPLFLLCNY) form a helical membrane-spanning segment. Residues 399–414 (QPRSHLTLVLFQSDIY) lie on the Extracellular side of the membrane. The chain crosses the membrane as a helical span at residues 415-437 (PILFTCLLGLSNGYLSTLVLMYG). Topologically, residues 438-450 (PKIVPRELAEATS) are cytoplasmic. Residues 451–471 (VVMLFYMSLGLMLGSACAALL) form a helical membrane-spanning segment. Residues 472 to 475 (EHFI) are Extracellular-facing.

This sequence belongs to the SLC29A/ENT transporter (TC 2.A.57) family. Widely expressed. Highest levels in heart and liver (at protein level).

It localises to the lysosome membrane. The protein resides in the late endosome membrane. Its subcellular location is the mitochondrion membrane. The protein localises to the cell membrane. It carries out the reaction adenosine(in) = adenosine(out). It catalyses the reaction guanosine(in) = guanosine(out). The catalysed reaction is inosine(in) = inosine(out). The enzyme catalyses uridine(out) = uridine(in). It carries out the reaction cytidine(in) = cytidine(out). It catalyses the reaction thymidine(in) = thymidine(out). The catalysed reaction is 2'-deoxyadenosine(in) = 2'-deoxyadenosine(out). The enzyme catalyses 2'-deoxycytidine(in) = 2'-deoxycytidine(out). It carries out the reaction guanine(out) = guanine(in). It catalyses the reaction uracil(in) = uracil(out). The catalysed reaction is (R)-noradrenaline(out) = (R)-noradrenaline(in). The enzyme catalyses dopamine(out) = dopamine(in). It carries out the reaction serotonin(out) = serotonin(in). It catalyses the reaction tyramine(in) = tyramine(out). The catalysed reaction is ATP(in) = ATP(out). Functionally, uniporter that mediates the facilitative transport of nucleoside across lysosomal and mitochondrial membranes. Functions as a non-electrogenic Na(+)-independent transporter. Substrate transport is pH-dependent and enhanced under acidic condition, probably reflecting the location of the transporter in acidic intracellular compartments. Proton is not a cotransporting ion but most likely change the ionization state of the transporter which dictates transport-permissible/impermissible conformation for nucleoside translocation. May direct the nucleoside transport from lysosomes to cytosol or cytosol to mitochondria to facilitate the fundamental function of salvage synthesis of nucleic acids. Involved in the transport of nucleosides (adenosine, guanosine, uridine, thymidine, cytidine and inosine) and deoxynucleosides (deoxyadenosine, deoxycytidine). Also mediates transport of purine nucleobases (adenine, guanine) and pyrimidine nucleobases (uracil). Also able to transport monoamine neurotransmitters dopamine, serotonin, noradrenaline and tyramine. Capable of transporting ATP. Mediates nucleoside export from lysosomes in macrophages, which regulates macrophage functions and numbers. The chain is Equilibrative nucleoside transporter 3 from Rattus norvegicus (Rat).